The sequence spans 443 residues: Exodeoxyribonuclease 7 large subunit (443 aa).

The protein belongs to the XseA family. In terms of assembly, heterooligomer composed of large and small subunits.

It localises to the cytoplasm. It carries out the reaction Exonucleolytic cleavage in either 5'- to 3'- or 3'- to 5'-direction to yield nucleoside 5'-phosphates.. In terms of biological role, bidirectionally degrades single-stranded DNA into large acid-insoluble oligonucleotides, which are then degraded further into small acid-soluble oligonucleotides. In Legionella pneumophila (strain Corby), this protein is Exodeoxyribonuclease 7 large subunit.